Consider the following 533-residue polypeptide: MHSRYRDGALLLAAFLLAYLLPLGFHGLWIPDETRYAQISQEMLHSGNWIAPHFMGLRYFEKPPAGYWLIALGQAVFGENLFGVRIASAISTGLSVLLAYLLAGKIWSDPRKSFASALLFMSFGFVAGQAGYSNLDPQFTLWTNLTLVAFWYAVHSIDRARLVAWTVVGVACGMGFMTKGFLAWALPAIITLPYMLWQRRLTELLRFGPLAVVIAIAVCLPWALAVHQQEPDYWRYFFWHEHIRRFAGDNAQHAQPWWFYLPLLIAACLPWALLLPVTFKQAWQRKSRPDTAFLLLWLVLPLAFLSLSKGKLPTYILPCLLPLALLMADALVEHLNQGRGRALRVNGIVNAALTFLGLLALIYVQLKQPVYENEPMHLLLAVIVLTGWTLTNALQGIRPLTFWALPAVGSWLLIVLLPAALPNDVVYNKTPDQFVARHQAELAACTHLLSNDLGAASALSWRLKRPDITLFNTWGELEYGLGYPDVQGRQVRLQGIDAWVTKARSEGRVGVIMRGKSDEELRELELLPKDGQR.

The next 13 helical transmembrane spans lie at 10-30 (LLLAAFLLAYLLPLGFHGLWI), 64-84 (PAGYWLIALGQAVFGENLFGV), 86-106 (IASAISTGLSVLLAYLLAGKI), 113-133 (SFASALLFMSFGFVAGQAGYS), 137-157 (PQFTLWTNLTLVAFWYAVHSI), 170-190 (VACGMGFMTKGFLAWALPAII), 207-227 (FGPLAVVIAIAVCLPWALAVH), 257-277 (WWFYLPLLIAACLPWALLLPV), 290-310 (DTAFLLLWLVLPLAFLSLSKG), 312-332 (LPTYILPCLLPLALLMADALV), 345-365 (VNGIVNAALTFLGLLALIYVQ), 377-397 (HLLLAVIVLTGWTLTNALQGI), and 402-422 (FWALPAVGSWLLIVLLPAALP).

This sequence belongs to the glycosyltransferase 83 family.

The protein localises to the cell inner membrane. The enzyme catalyses 4-amino-4-deoxy-alpha-L-arabinopyranosyl di-trans,octa-cis-undecaprenyl phosphate + lipid IVA = lipid IIA + di-trans,octa-cis-undecaprenyl phosphate.. Its pathway is lipopolysaccharide metabolism; 4-amino-4-deoxy-beta-L-arabinose-lipid A biosynthesis. Catalyzes the transfer of the L-Ara4N moiety of the glycolipid undecaprenyl phosphate-alpha-L-Ara4N to lipid A. The modified arabinose is attached to lipid A and is required for resistance to polymyxin and cationic antimicrobial peptides. The polypeptide is Undecaprenyl phosphate-alpha-4-amino-4-deoxy-L-arabinose arabinosyl transferase (Pseudomonas savastanoi pv. phaseolicola (strain 1448A / Race 6) (Pseudomonas syringae pv. phaseolicola (strain 1448A / Race 6))).